The chain runs to 327 residues: Regulatory protein MsrR (327 aa).

Over residues 1–18 the composition is skewed to basic and acidic residues; sequence MDKETNDNEYRRQSEHRT. The tract at residues 1-24 is disordered; that stretch reads MDKETNDNEYRRQSEHRTSAPKRK. The Cytoplasmic segment spans residues 1–31; the sequence is MDKETNDNEYRRQSEHRTSAPKRKKKKKIRK. The helical; Signal-anchor for type II membrane protein transmembrane segment at 32–52 threads the bilayer; sequence LPIILLIVVILLIALVVYIVH. Topologically, residues 53–327 are extracellular; sequence SYNSGVEYAK…QAIKDFLDED (275 aa).

Belongs to the LytR/CpsA/Psr (LCP) family.

It is found in the cell membrane. In terms of biological role, involved in SarA attenuation. Affects resistance to oxacillin and teicoplanin, as well as the synthesis of virulence factors. This chain is Regulatory protein MsrR (msrR), found in Staphylococcus aureus (strain NCTC 8325 / PS 47).